The primary structure comprises 321 residues: Replication factor C small subunit (321 aa).

ATP is bound at residue 46–53; it reads GPAGVGKT.

This sequence belongs to the activator 1 small subunits family. RfcS subfamily. Heterohexamer composed of four small subunits (RfcS) and two large subunits (RfcL).

Functionally, part of the RFC clamp loader complex which loads the PCNA sliding clamp onto DNA. The complex possesses DNA-dependent ATPase activity which is further stimulated by PCNA. In conjunction with PCNA stimulates DNA synthesis by PolB, relieving inhibition by replication protein A (RPA). The polypeptide is Replication factor C small subunit (rfcS) (Methanothermobacter thermautotrophicus (strain ATCC 29096 / DSM 1053 / JCM 10044 / NBRC 100330 / Delta H) (Methanobacterium thermoautotrophicum)).